The sequence spans 1826 residues: ATPase family AAA domain-containing protein 5 (1826 aa).

Serine 44 is modified (phosphoserine). A Glycyl lysine isopeptide (Lys-Gly) (interchain with G-Cter in SUMO2) cross-link involves residue lysine 127. 7 disordered regions span residues 170 to 254, 282 to 311, 323 to 367, 398 to 572, 588 to 623, 647 to 684, and 709 to 729; these read SIED…KRAD, PAVPACVPSGPGEAVKSGSEGELSGSCEPS, AQVH…RKSN, QQFM…EPGS, RSCSTPATNALGGTESEDAQDTIPVKASTPKSARTS, KFTRISTPKKSKKSSKKSETTEEELTSQKKKANSTSKN, and VVPLRRSSRHQARSAKEKSPE. Serine 215 bears the Phosphoserine mark. A compositionally biased stretch (basic and acidic residues) spans 243–254; sequence NDSRTHATKRAD. Over residues 298–311 the composition is skewed to low complexity; the sequence is SGSEGELSGSCEPS. Serine 351 and serine 366 each carry phosphoserine. The interval 365 to 381 is interaction with WDR48; that stretch reads KSNVVIQEGQLELAVLE. Residues 418–442 show a composition bias toward basic and acidic residues; the sequence is KPLEKQKDPSEKSVHEGDSSSEKII. Residues 445 to 456 are compositionally biased toward polar residues; sequence PNIQRVSSQGCL. The segment covering 459 to 468 has biased composition (basic and acidic residues); the sequence is HADRGSFPKE. Over residues 469–481 the composition is skewed to basic residues; sequence KSKKPNKKGKKTR. The span at 487–505 shows a compositional bias: basic and acidic residues; sequence NREENIQKEKTAFSLKDEQ. A compositionally biased stretch (polar residues) spans 540-559; sequence DSVQMSLCNRNKSRSSSTPT. 2 positions are modified to phosphoserine: serine 591 and serine 603. Serine 727 and serine 801 each carry phosphoserine. The segment at 965–1034 is disordered; sequence GKQASPQLQP…NLDPSRDSGT (70 aa). The segment covering 1006 to 1019 has biased composition (basic and acidic residues); sequence EEMKGRSKDLDERI. Serine 1104 bears the Phosphoserine mark. Residue 1119-1126 coordinates ATP; that stretch reads GPTGVGKT. The disordered stretch occupies residues 1183–1216; that stretch reads YNIGKSPKKLNSPGKVVTSPRKLPPSSPKTSGQK. Residues 1415 to 1419 carry the LXCXE motif motif; the sequence is LVCSE. 2 disordered regions span residues 1527–1552 and 1592–1611; these read PASMGHLTRKQSKDQPLRKSQKRKQK and SNPEIKTQNSGFKPHSVPQP. The segment at 1612–1701 is interaction with RAD51 and RFC5; that stretch reads PKTLAEKKCC…ATAEALSFTE (90 aa).

Belongs to the AAA ATPase family. In terms of assembly, component of a heteropentameric replication factor ATAD5 RFC-like complex composed of one large subunit (ATAD5) and four small subunits (RFC2, RFC3, RFC4 and RFC5). Within the ATAD5 RFC-like complex, interacts with RFC2, RFC4 and RFC5. Within the ATAD5 RFC-like complex, interacts directly via-N terminal with RAD51; the interactions is enhanced under replication stress. Interacts with RB1 predominantly in G1 phase via its LXCXE motif. Interacts with RAD9A in growing cells. The interaction with RAD9A is reduced after exposure to DNA replication-inhibiting agents. Interacts with BRD4. Interacts with PCNA. Interacts with deubiquitinating enzyme USP1, and its associated factor, WDR48. ATR may stimulate the RAD9A dissociation. In terms of tissue distribution, expressed ubiquitously in all cell lines like teratocarcinoma, cell lymphoma, lymphoma.

It is found in the nucleus. Its function is as follows. Has an important role in DNA replication and in maintaining genome integrity during replication stress. Involved in a RAD9A-related damage checkpoint, a pathway that is important in determining whether DNA damage is compatible with cell survival or whether it requires cell elimination by apoptosis. Modulates the RAD9A interaction with BCL2 and thereby induces DNA damage-induced apoptosis. Promotes PCNA deubiquitination by recruiting the ubiquitin-specific protease 1 (USP1) and WDR48 thereby down-regulating the error-prone damage bypass pathway. As component of the ATAD5 RFC-like complex, regulates the function of the DNA polymerase processivity factor PCNA by unloading the ring-shaped PCNA homotrimer from DNA after replication during the S phase of the cell cycle. This seems to be dependent on its ATPase activity. Plays important roles in restarting stalled replication forks under replication stress, by unloading the PCNA homotrimer from DNA and recruiting RAD51 possibly through an ATR-dependent manner. Ultimately this enables replication fork regression, breakage, and eventual fork restart. Both the PCNA unloading activity and the interaction with WDR48 are required to efficiently recruit RAD51 to stalled replication forks. Promotes the generation of MUS81-mediated single-stranded DNA-associated breaks in response to replication stress, which is an alternative pathway to restart stalled/regressed replication forks. In Mus musculus (Mouse), this protein is ATPase family AAA domain-containing protein 5 (Atad5).